A 78-amino-acid chain; its full sequence is uncharacterized protein (78 aa).

This is an uncharacterized protein from Escherichia coli.